The following is a 318-amino-acid chain: Acetyl-coenzyme A carboxylase carboxyl transferase subunit alpha (318 aa).

The 255-residue stretch at 41–295 (HLEKKNEELT…KQRILTDLNE (255 aa)) folds into the CoA carboxyltransferase C-terminal domain.

Belongs to the AccA family. In terms of assembly, acetyl-CoA carboxylase is a heterohexamer composed of biotin carboxyl carrier protein (AccB), biotin carboxylase (AccC) and two subunits each of ACCase subunit alpha (AccA) and ACCase subunit beta (AccD).

Its subcellular location is the cytoplasm. The enzyme catalyses N(6)-carboxybiotinyl-L-lysyl-[protein] + acetyl-CoA = N(6)-biotinyl-L-lysyl-[protein] + malonyl-CoA. It participates in lipid metabolism; malonyl-CoA biosynthesis; malonyl-CoA from acetyl-CoA: step 1/1. Component of the acetyl coenzyme A carboxylase (ACC) complex. First, biotin carboxylase catalyzes the carboxylation of biotin on its carrier protein (BCCP) and then the CO(2) group is transferred by the carboxyltransferase to acetyl-CoA to form malonyl-CoA. This is Acetyl-coenzyme A carboxylase carboxyl transferase subunit alpha from Tolumonas auensis (strain DSM 9187 / NBRC 110442 / TA 4).